The primary structure comprises 290 residues: MRMLVSKSIFAEPEPGYYAHTPVSLVICAPNMPDLLSHRLEDGFRAASRHAEALAKLQYRDPNAKDVLGFQLAFSTTKSYWDYVEEDDPECGQRFSKAMRAVTVNKLGDVPKLYPFNKLVDDGGIIVDVGGGMGQVAQSILSHWHGLGLKCIVQDKFASKSGSTHPDLEMQSYDFFSPQPVKGSAAYLFRHIFHDWPDDACITILKNTVEAMNPHQSRILICDQIMEETNPSTAAVLYDIDMMCLYGGKERTLSEWEELLKAADQRLEIKNVFRSPNQVSGILEVQLCCD.

Asp-155 serves as a coordination point for S-adenosyl-L-methionine. The active-site Proton acceptor is the His-194.

The protein belongs to the class I-like SAM-binding methyltransferase superfamily. Cation-independent O-methyltransferase family.

Its pathway is secondary metabolite biosynthesis. In terms of biological role, O-methyltransferase; part of the gene cluster that mediates the biosynthesis of the aspergillicins A and F, 2 cryptic cyclic hexa-depsipeptides. The hexamodular NRPS agiA catalyzes the condensation of the six amino acid residues including N-Me-L-O-Me-tyrosine, L-proline 1, L-proline 2, D-isoleucine, O-acetyl-threonine, and L-isoleucine. The starting condensation domain (C1) of agiA probably loads acetyl-CoA which is condensed on the N-terminus of threonine by the first module to yield O-acetyl-threonine. The second module then loads L-isoleucine. The epimerase (E) domain on module 2 is probably involved in the formation of the D-isoleucine moiety. Modules 3 and 4 further load 2 successive L-prolines. Module 5 is then involved in the condensation of O-Me-L-tyrosine produced by the O-methyltransferase agiB and the N-methyl transferase (NMeT) domain on module 5 probably catalyzes the N-methylation to yield the N-Me-L-O-Me-tyrosine moiety. The A domain of module 5 loads preferentially O-Me-L-tyrosine, but it can also accept L-phenylalanine, which leads to the production of aspergillicin G. Module 6 then loads the last residue, L-isoleucine. The C-terminal thiolesterase (TE) domain probably cyclizes the peptide using the hydroxy group from threonine to form the cyclic depsipeptide. This is O-methyltransferase agiB from Aspergillus flavus (strain ATCC 200026 / FGSC A1120 / IAM 13836 / NRRL 3357 / JCM 12722 / SRRC 167).